The primary structure comprises 336 residues: MSAQVIAIDAMGGDFGPRSIVQASIACLSATPSLHLTLVGQPSLLEDLISGLPAADRARLQIVAASEVVGMDERPSQALRGKPDSSMRIALELVRDGKAQACVSAGNTGALMALSRFVLKTLPGIDRPAMVAAIPTQTGYCQLLDLGANVDCSAENLYQFAVMGSVAAQALGVHRPRVALLNIGTEDIKGNQQVKLAATLLQSARGLNYVGFVEGDGLYRGEADVVVCDGFVGNILLKSSEGLATMIGARIEKLFKGGAFARVAGAVAMPLLKRLQADLAPARHNGASFLGLQGIVIKSHGSAGVQGFQSAIQRALIEIQENLPQRLHGRLEDLLP.

It belongs to the PlsX family. As to quaternary structure, homodimer. Probably interacts with PlsY.

Its subcellular location is the cytoplasm. It carries out the reaction a fatty acyl-[ACP] + phosphate = an acyl phosphate + holo-[ACP]. Its pathway is lipid metabolism; phospholipid metabolism. Its function is as follows. Catalyzes the reversible formation of acyl-phosphate (acyl-PO(4)) from acyl-[acyl-carrier-protein] (acyl-ACP). This enzyme utilizes acyl-ACP as fatty acyl donor, but not acyl-CoA. The protein is Phosphate acyltransferase of Pseudomonas putida (strain ATCC 700007 / DSM 6899 / JCM 31910 / BCRC 17059 / LMG 24140 / F1).